The chain runs to 412 residues: Probable tRNA sulfurtransferase (412 aa).

The 106-residue stretch at 58-163 folds into the THUMP domain; sequence DEVIKQLGYV…SEGTYIYVGK (106 aa). Residues 181–182, 206–207, arginine 265, glycine 287, and glutamine 296 contribute to the ATP site; these read ML and HF.

Belongs to the ThiI family.

It localises to the cytoplasm. The enzyme catalyses [ThiI sulfur-carrier protein]-S-sulfanyl-L-cysteine + a uridine in tRNA + 2 reduced [2Fe-2S]-[ferredoxin] + ATP + H(+) = [ThiI sulfur-carrier protein]-L-cysteine + a 4-thiouridine in tRNA + 2 oxidized [2Fe-2S]-[ferredoxin] + AMP + diphosphate. It carries out the reaction [ThiS sulfur-carrier protein]-C-terminal Gly-Gly-AMP + S-sulfanyl-L-cysteinyl-[cysteine desulfurase] + AH2 = [ThiS sulfur-carrier protein]-C-terminal-Gly-aminoethanethioate + L-cysteinyl-[cysteine desulfurase] + A + AMP + 2 H(+). Its pathway is cofactor biosynthesis; thiamine diphosphate biosynthesis. In terms of biological role, catalyzes the ATP-dependent transfer of a sulfur to tRNA to produce 4-thiouridine in position 8 of tRNAs, which functions as a near-UV photosensor. Also catalyzes the transfer of sulfur to the sulfur carrier protein ThiS, forming ThiS-thiocarboxylate. This is a step in the synthesis of thiazole, in the thiamine biosynthesis pathway. The sulfur is donated as persulfide by IscS. In Acholeplasma laidlawii (strain PG-8A), this protein is Probable tRNA sulfurtransferase.